The following is a 743-amino-acid chain: Inhibitor of nuclear factor kappa-B kinase subunit alpha (743 aa).

One can recognise a Protein kinase domain in the interval 15–300 (WDMKDRLGTG…IDCGRPRCFM (286 aa)). Residues 21 to 29 (LGTGGFGNV) and lysine 44 contribute to the ATP site. The Proton acceptor role is filled by aspartate 144. Positions 453 to 474 (LLRFNTNLTKMKNTMVSASQQL) are leucine-zipper. The tract at residues 736–741 (MDFSWL) is NEMO-binding.

Belongs to the protein kinase superfamily. Ser/Thr protein kinase family. I-kappa-B kinase subfamily.

Its subcellular location is the cytoplasm. The protein localises to the nucleus. The catalysed reaction is L-seryl-[I-kappa-B protein] + ATP = O-phospho-L-seryl-[I-kappa-B protein] + ADP + H(+). Activated when phosphorylated and inactivated when dephosphorylated. In terms of biological role, phosphorylates inhibitors of NF-kappa-B thus leading to the dissociation of the inhibitor/NF-kappa-B complex and ultimately the degradation of the inhibitor. Phosphorylates 'Ser-10' of histone H3 at NF-kappa-B-regulated promoters during inflammatory responses triggered by cytokines. This Xenopus laevis (African clawed frog) protein is Inhibitor of nuclear factor kappa-B kinase subunit alpha (chuk).